A 298-amino-acid chain; its full sequence is Small ribosomal subunit protein uS3m (298 aa).

This sequence belongs to the universal ribosomal protein uS3 family.

It is found in the mitochondrion. In Acanthamoeba castellanii (Amoeba), this protein is Small ribosomal subunit protein uS3m (RPS3).